The primary structure comprises 349 residues: GTP 3',8-cyclase (349 aa).

The region spanning 24-250 (PFGRAVTYLR…DIPYRTGGPA (227 aa)) is the Radical SAM core domain. Arginine 33 provides a ligand contact to GTP. Residues cysteine 40 and cysteine 44 each coordinate [4Fe-4S] cluster. Position 46 (tyrosine 46) interacts with S-adenosyl-L-methionine. Cysteine 47 is a binding site for [4Fe-4S] cluster. Arginine 82 lines the GTP pocket. Glycine 86 is an S-adenosyl-L-methionine binding site. Threonine 116 serves as a coordination point for GTP. Serine 140 lines the S-adenosyl-L-methionine pocket. Residue lysine 176 participates in GTP binding. Methionine 210 is an S-adenosyl-L-methionine binding site. Residues cysteine 273 and cysteine 276 each contribute to the [4Fe-4S] cluster site. 278-280 (RVR) serves as a coordination point for GTP. Cysteine 290 serves as a coordination point for [4Fe-4S] cluster.

The protein belongs to the radical SAM superfamily. MoaA family. Monomer and homodimer. Requires [4Fe-4S] cluster as cofactor.

It catalyses the reaction GTP + AH2 + S-adenosyl-L-methionine = (8S)-3',8-cyclo-7,8-dihydroguanosine 5'-triphosphate + 5'-deoxyadenosine + L-methionine + A + H(+). It participates in cofactor biosynthesis; molybdopterin biosynthesis. Catalyzes the cyclization of GTP to (8S)-3',8-cyclo-7,8-dihydroguanosine 5'-triphosphate. The chain is GTP 3',8-cyclase from Rhizobium meliloti (strain 1021) (Ensifer meliloti).